A 235-amino-acid chain; its full sequence is Exosome complex component RRP46 (235 aa).

The segment at 1–21 (MEGAKRADANLLTDTGTESSP) is disordered. Positions 12–21 (LTDTGTESSP) are enriched in polar residues. Phosphoserine is present on residues Ser20 and Ser23.

Belongs to the RNase PH family. In terms of assembly, homodimer. Component of the RNA exosome core complex (Exo-9), composed of EXOSC1, EXOSC2, EXOSC3, EXOSC4, EXOSC5, EXOSC6, EXOSC7, EXOSC8 and EXOSC9; within the complex interacts with EXOSC3, EXOSC8, and EXOSC9. The catalytically inactive RNA exosome core complex (Exo-9) associates with the catalytic subunit EXOSC10/RRP6. Exo-9 may associate with DIS3 to form the nucleolar exosome complex, or DIS3L to form the cytoplasmic exosome complex. Exo-9 is formed by a hexameric base ring consisting of the heterodimers EXOSC4-EXOSC9, EXOSC5-EXOSC8 and EXOSC6-EXOSC7, and a cap ring consisting of EXOSC1, EXOSC2 and EXOSC3. The RNA exosome complex associates with cofactors C1D/RRP47, MPHOSPH6/MPP6 and MTREX/MTR4. Interacts with GTPBP1. Interacts with ZC3HAV1. Interacts with DDX17 only in the presence of ZC3HAV1 in an RNA-independent manner.

It localises to the nucleus. The protein resides in the nucleolus. The protein localises to the cytoplasm. Its function is as follows. Non-catalytic component of the RNA exosome complex which has 3'-&gt;5' exoribonuclease activity and participates in a multitude of cellular RNA processing and degradation events. In the nucleus, the RNA exosome complex is involved in proper maturation of stable RNA species such as rRNA, snRNA and snoRNA, in the elimination of RNA processing by-products and non-coding 'pervasive' transcripts, such as antisense RNA species and promoter-upstream transcripts (PROMPTs), and of mRNAs with processing defects, thereby limiting or excluding their export to the cytoplasm. The RNA exosome may be involved in Ig class switch recombination (CSR) and/or Ig variable region somatic hypermutation (SHM) by targeting AICDA deamination activity to transcribed dsDNA substrates. In the cytoplasm, the RNA exosome complex is involved in general mRNA turnover and specifically degrades inherently unstable mRNAs containing AU-rich elements (AREs) within their 3' untranslated regions, and in RNA surveillance pathways, preventing translation of aberrant mRNAs. It seems to be involved in degradation of histone mRNA. The catalytic inactive RNA exosome core complex of 9 subunits (Exo-9) is proposed to play a pivotal role in the binding and presentation of RNA for ribonucleolysis, and to serve as a scaffold for the association with catalytic subunits and accessory proteins or complexes. In vitro, EXOSC5 does not bind or digest single-stranded RNA and binds to double-stranded DNA without detectable DNase activity. The polypeptide is Exosome complex component RRP46 (Exosc5) (Mus musculus (Mouse)).